Consider the following 501-residue polypeptide: ATP synthase subunit alpha (501 aa).

Position 169–176 (169–176) interacts with ATP; it reads GDRQTGKT.

This sequence belongs to the ATPase alpha/beta chains family. As to quaternary structure, F-type ATPases have 2 components, CF(1) - the catalytic core - and CF(0) - the membrane proton channel. CF(1) has five subunits: alpha(3), beta(3), gamma(1), delta(1), epsilon(1). CF(0) has three main subunits: a(1), b(2) and c(9-12). The alpha and beta chains form an alternating ring which encloses part of the gamma chain. CF(1) is attached to CF(0) by a central stalk formed by the gamma and epsilon chains, while a peripheral stalk is formed by the delta and b chains.

Its subcellular location is the cell membrane. The enzyme catalyses ATP + H2O + 4 H(+)(in) = ADP + phosphate + 5 H(+)(out). In terms of biological role, produces ATP from ADP in the presence of a proton gradient across the membrane. The alpha chain is a regulatory subunit. This Streptococcus pyogenes serotype M2 (strain MGAS10270) protein is ATP synthase subunit alpha.